Reading from the N-terminus, the 354-residue chain is 3-isopropylmalate dehydrogenase (354 aa).

An NAD(+)-binding site is contributed by 76–87 (GPRWDGAKERPE). Residues Arg94, Arg104, Arg130, and Asp215 each coordinate substrate. The Mg(2+) site is built by Asp215, Asp239, and Asp243. 273–285 (GSAPDIAGKNKAN) contributes to the NAD(+) binding site.

It belongs to the isocitrate and isopropylmalate dehydrogenases family. LeuB type 1 subfamily. Homodimer. The cofactor is Mg(2+). It depends on Mn(2+) as a cofactor.

It is found in the cytoplasm. The enzyme catalyses (2R,3S)-3-isopropylmalate + NAD(+) = 4-methyl-2-oxopentanoate + CO2 + NADH. Its pathway is amino-acid biosynthesis; L-leucine biosynthesis; L-leucine from 3-methyl-2-oxobutanoate: step 3/4. Catalyzes the oxidation of 3-carboxy-2-hydroxy-4-methylpentanoate (3-isopropylmalate) to 3-carboxy-4-methyl-2-oxopentanoate. The product decarboxylates to 4-methyl-2 oxopentanoate. The protein is 3-isopropylmalate dehydrogenase of Bacillus cereus (strain ZK / E33L).